Consider the following 335-residue polypeptide: Protein-lysine N-methyltransferase EEF2KMT (335 aa).

Position 1 is an N-acetylmethionine (methionine 1). S-adenosyl-L-methionine is bound by residues tryptophan 139, 165–167, tryptophan 228, and alanine 247; that span reads GSG.

This sequence belongs to the class I-like SAM-binding methyltransferase superfamily. EEF2KMT family. As to quaternary structure, interacts with FAM86B2 and FAM86C1P.

Its subcellular location is the cytoplasm. The enzyme catalyses L-lysyl-[protein] + 3 S-adenosyl-L-methionine = N(6),N(6),N(6)-trimethyl-L-lysyl-[protein] + 3 S-adenosyl-L-homocysteine + 3 H(+). Its function is as follows. Catalyzes the trimethylation of eukaryotic elongation factor 2 (EEF2) on 'Lys-525'. This Mus musculus (Mouse) protein is Protein-lysine N-methyltransferase EEF2KMT (Eef2kmt).